A 185-amino-acid polypeptide reads, in one-letter code: Casparian strip membrane protein 1 (185 aa).

The Cytoplasmic portion of the chain corresponds to 1 to 32; it reads MKAVSIEAGERSKAKRVHGVNRGISVFDLVLR. A helical transmembrane segment spans residues 33 to 53; the sequence is IVALVGTLASAVAMGTAGQAL. Topologically, residues 54 to 73 are extracellular; sequence SFSTQIVNFEAQYDDIDAFK. A helical transmembrane segment spans residues 74-94; the sequence is FFVVSNSITCVYLALSIPISI. The Cytoplasmic segment spans residues 95 to 106; the sequence is FHIIRSRAGKSR. Residues 107 to 127 form a helical membrane-spanning segment; that stretch reads VLLIVLDAIMLVFLTSGASAA. Over 128 to 160 the chain is Extracellular; the sequence is AAIVYLAHNGNTSTNWFSICQQYTDFCQRSAGS. Asparagine 138 carries an N-linked (GlcNAc...) asparagine glycan. A helical transmembrane segment spans residues 161–181; it reads LIGSFGAMALMVLLIILSSIA. Over 182 to 185 the chain is Cytoplasmic; sequence LSRR.

This sequence belongs to the Casparian strip membrane proteins (CASP) family. In terms of assembly, homodimer and heterodimers.

It localises to the cell membrane. Functionally, regulates membrane-cell wall junctions and localized cell wall deposition. Required for establishment of the Casparian strip membrane domain (CSD) and the subsequent formation of Casparian strips, a cell wall modification of the root endodermis that determines an apoplastic barrier between the intraorganismal apoplasm and the extraorganismal apoplasm and prevents lateral diffusion. This Solanum demissum (Wild potato) protein is Casparian strip membrane protein 1.